The chain runs to 223 residues: Proteasome subunit beta type-1 (223 aa).

It belongs to the peptidase T1B family. As to quaternary structure, the 26S proteasome consists of a 20S proteasome core and two 19S regulatory subunits. The 20S proteasome core is composed of 28 subunits that are arranged in four stacked rings, resulting in a barrel-shaped structure. The two end rings are each formed by seven alpha subunits, and the two central rings are each formed by seven beta subunits. The catalytic chamber with the active sites is on the inside of the barrel.

The protein localises to the cytoplasm. It localises to the nucleus. Functionally, non-catalytic component of the proteasome, a multicatalytic proteinase complex which is characterized by its ability to cleave peptides with Arg, Phe, Tyr, Leu, and Glu adjacent to the leaving group at neutral or slightly basic pH. The proteasome has an ATP-dependent proteolytic activity. The protein is Proteasome subunit beta type-1 (PBF1) of Petunia hybrida (Petunia).